A 234-amino-acid polypeptide reads, in one-letter code: Urease subunit alpha (234 aa).

A urease gamma region spans residues 1 to 102 (MKLTPKELDK…LVTIHTPVEA (102 aa)). The interval 103 to 234 (GSDKLAPGEV…GTINCGCDNK (132 aa)) is urease beta.

It in the N-terminal section; belongs to the urease gamma subunit family. This sequence in the C-terminal section; belongs to the urease beta subunit family. Heterohexamer of 3 UreA (alpha) and 3 UreB (beta) subunits.

It is found in the cytoplasm. It catalyses the reaction urea + 2 H2O + H(+) = hydrogencarbonate + 2 NH4(+). The protein operates within nitrogen metabolism; urea degradation; CO(2) and NH(3) from urea (urease route): step 1/1. The sequence is that of Urease subunit alpha from Helicobacter heilmannii.